The chain runs to 89 residues: Large ribosomal subunit protein bL27 (89 aa).

Residues 1–26 form a disordered region; that stretch reads MAQKKAGGSSRNGRDSVGQRRGVKRF.

It belongs to the bacterial ribosomal protein bL27 family.

The polypeptide is Large ribosomal subunit protein bL27 (Desulfovibrio desulfuricans (strain ATCC 27774 / DSM 6949 / MB)).